The primary structure comprises 175 residues: DDB1- and CUL4-associated factor 16 (175 aa).

The interval 1–42 (MGPRNPSPDPLSESESEEEENTNYLNESSGEEWDSSEEEDPV) is disordered. Acidic residues-rich tracts occupy residues 12–21 (SESESEEEEN) and 29–41 (SGEE…EEDP). Lys-61 carries the post-translational modification N6-acetyllysine.

Interacts with DDB1 and CUL4A.

The protein localises to the nucleus. It functions in the pathway protein modification; protein ubiquitination. In terms of biological role, functions as a substrate recognition component for CUL4-DDB1 E3 ubiquitin-protein ligase complex, which mediates ubiquitination and proteasome-dependent degradation of nuclear proteins. In Bos taurus (Bovine), this protein is DDB1- and CUL4-associated factor 16 (DCAF16).